Here is a 74-residue protein sequence, read N- to C-terminus: Sodium channel neurotoxin MeuNaTxalpha-6 (74 aa).

A signal peptide spans 1–7; sequence LMTGVES. In terms of domain architecture, LCN-type CS-alpha/beta spans 9 to 73; the sequence is RDAYIAKPHN…VPIRIPGKCH (65 aa). Disulfide bonds link C19-C72, C23-C45, C31-C55, and C35-C57. Residue R74 is a propeptide, removed by a carboxypeptidase.

This sequence belongs to the long (4 C-C) scorpion toxin superfamily. Sodium channel inhibitor family. Alpha subfamily. In terms of tissue distribution, expressed by the venom gland.

The protein resides in the secreted. Functionally, alpha toxins bind voltage-independently at site-3 of sodium channels (Nav) and inhibit the inactivation of the activated channels, thereby blocking neuronal transmission. This chain is Sodium channel neurotoxin MeuNaTxalpha-6, found in Mesobuthus eupeus (Lesser Asian scorpion).